Here is a 346-residue protein sequence, read N- to C-terminus: Phosphoribosylformylglycinamidine cyclo-ligase (346 aa).

It belongs to the AIR synthase family.

It localises to the cytoplasm. It carries out the reaction 2-formamido-N(1)-(5-O-phospho-beta-D-ribosyl)acetamidine + ATP = 5-amino-1-(5-phospho-beta-D-ribosyl)imidazole + ADP + phosphate + H(+). Its pathway is purine metabolism; IMP biosynthesis via de novo pathway; 5-amino-1-(5-phospho-D-ribosyl)imidazole from N(2)-formyl-N(1)-(5-phospho-D-ribosyl)glycinamide: step 2/2. The polypeptide is Phosphoribosylformylglycinamidine cyclo-ligase (Bacillus cereus (strain G9842)).